The sequence spans 75 residues: MVIKKLDVVTQVCPFPLIEAKAALAEMVSGDELVIEFDCTQATEAIPQWAAEEGHAITDYQQIGDAAWSITVQKA.

Cys-13 functions as the Cysteine persulfide intermediate in the catalytic mechanism.

Belongs to the sulfur carrier protein TusA family.

Involved in thiosulfate metabolism. The polypeptide is Putative sulfur carrier protein TsuB (Escherichia coli (strain K12)).